The following is a 255-amino-acid chain: 3-deoxy-manno-octulosonate cytidylyltransferase (255 aa).

It belongs to the KdsB family.

It is found in the cytoplasm. The enzyme catalyses 3-deoxy-alpha-D-manno-oct-2-ulosonate + CTP = CMP-3-deoxy-beta-D-manno-octulosonate + diphosphate. It participates in nucleotide-sugar biosynthesis; CMP-3-deoxy-D-manno-octulosonate biosynthesis; CMP-3-deoxy-D-manno-octulosonate from 3-deoxy-D-manno-octulosonate and CTP: step 1/1. The protein operates within bacterial outer membrane biogenesis; lipopolysaccharide biosynthesis. Activates KDO (a required 8-carbon sugar) for incorporation into bacterial lipopolysaccharide in Gram-negative bacteria. The polypeptide is 3-deoxy-manno-octulosonate cytidylyltransferase (Psychromonas ingrahamii (strain DSM 17664 / CCUG 51855 / 37)).